We begin with the raw amino-acid sequence, 351 residues long: GDSL esterase/lipase At3g14820 (351 aa).

The signal sequence occupies residues 1–22 (MDLHLIGFLLWFFVVQVTTSSA). Asparagine 25 carries an N-linked (GlcNAc...) asparagine glycan. Serine 39 functions as the Nucleophile in the catalytic mechanism. Catalysis depends on residues aspartate 325 and histidine 328.

The protein belongs to the 'GDSL' lipolytic enzyme family.

Its subcellular location is the secreted. The chain is GDSL esterase/lipase At3g14820 from Arabidopsis thaliana (Mouse-ear cress).